The following is a 231-amino-acid chain: Large ribosomal subunit protein uL1 (231 aa).

Belongs to the universal ribosomal protein uL1 family. As to quaternary structure, part of the 50S ribosomal subunit.

Binds directly to 23S rRNA. The L1 stalk is quite mobile in the ribosome, and is involved in E site tRNA release. Functionally, protein L1 is also a translational repressor protein, it controls the translation of the L11 operon by binding to its mRNA. The sequence is that of Large ribosomal subunit protein uL1 from Thioalkalivibrio sulfidiphilus (strain HL-EbGR7).